A 100-amino-acid chain; its full sequence is Large ribosomal subunit protein uL23 (100 aa).

The protein belongs to the universal ribosomal protein uL23 family. Part of the 50S ribosomal subunit. Contacts protein L29, and trigger factor when it is bound to the ribosome.

One of the early assembly proteins it binds 23S rRNA. One of the proteins that surrounds the polypeptide exit tunnel on the outside of the ribosome. Forms the main docking site for trigger factor binding to the ribosome. The sequence is that of Large ribosomal subunit protein uL23 from Lactobacillus acidophilus (strain ATCC 700396 / NCK56 / N2 / NCFM).